The sequence spans 256 residues: Type III pantothenate kinase (256 aa).

Residue 6-13 participates in ATP binding; it reads DVGNTNMV. Residues Tyr-100 and 107 to 110 contribute to the substrate site; that span reads GADR. Asp-109 serves as the catalytic Proton acceptor. Asp-129 is a K(+) binding site. Thr-132 is a binding site for ATP. Thr-184 contributes to the substrate binding site.

It belongs to the type III pantothenate kinase family. As to quaternary structure, homodimer. It depends on NH4(+) as a cofactor. The cofactor is K(+).

It is found in the cytoplasm. It carries out the reaction (R)-pantothenate + ATP = (R)-4'-phosphopantothenate + ADP + H(+). Its pathway is cofactor biosynthesis; coenzyme A biosynthesis; CoA from (R)-pantothenate: step 1/5. Functionally, catalyzes the phosphorylation of pantothenate (Pan), the first step in CoA biosynthesis. The chain is Type III pantothenate kinase from Clostridioides difficile (strain 630) (Peptoclostridium difficile).